A 177-amino-acid polypeptide reads, in one-letter code: Archaemetzincin (177 aa).

His129 contacts Zn(2+). The active-site Proton acceptor is the Glu130. Positions 133, 139, 140, 145, 164, and 167 each coordinate Zn(2+).

Belongs to the peptidase M54 family. As to quaternary structure, monomer. Zn(2+) is required as a cofactor.

Functionally, probable zinc metalloprotease whose natural substrate is unknown. This Sulfolobus acidocaldarius (strain ATCC 33909 / DSM 639 / JCM 8929 / NBRC 15157 / NCIMB 11770) protein is Archaemetzincin.